The sequence spans 189 residues: GMP synthase [glutamine-hydrolyzing] subunit A (189 aa).

The Glutamine amidotransferase type-1 domain maps to 3 to 187 (RIDVIDNHGQ…LSVCDQQSVA (185 aa)). The active-site Nucleophile is the C73. Active-site residues include H161 and E163.

As to quaternary structure, heterodimer composed of a glutamine amidotransferase subunit (A) and a GMP-binding subunit (B).

The catalysed reaction is XMP + L-glutamine + ATP + H2O = GMP + L-glutamate + AMP + diphosphate + 2 H(+). Its pathway is purine metabolism; GMP biosynthesis; GMP from XMP (L-Gln route): step 1/1. Its function is as follows. Catalyzes the synthesis of GMP from XMP. The sequence is that of GMP synthase [glutamine-hydrolyzing] subunit A from Haloarcula marismortui (strain ATCC 43049 / DSM 3752 / JCM 8966 / VKM B-1809) (Halobacterium marismortui).